Reading from the N-terminus, the 87-residue chain is Small ribosomal subunit protein bS20 (87 aa).

Belongs to the bacterial ribosomal protein bS20 family.

Functionally, binds directly to 16S ribosomal RNA. The chain is Small ribosomal subunit protein bS20 from Roseobacter denitrificans (strain ATCC 33942 / OCh 114) (Erythrobacter sp. (strain OCh 114)).